The primary structure comprises 140 residues: Nucleoside diphosphate kinase (140 aa).

Positions 11, 59, 87, 93, 104, and 114 each coordinate ATP. His-117 (pros-phosphohistidine intermediate) is an active-site residue.

The protein belongs to the NDK family. Homotetramer. It depends on Mg(2+) as a cofactor.

It is found in the cytoplasm. The enzyme catalyses a 2'-deoxyribonucleoside 5'-diphosphate + ATP = a 2'-deoxyribonucleoside 5'-triphosphate + ADP. The catalysed reaction is a ribonucleoside 5'-diphosphate + ATP = a ribonucleoside 5'-triphosphate + ADP. Functionally, major role in the synthesis of nucleoside triphosphates other than ATP. The ATP gamma phosphate is transferred to the NDP beta phosphate via a ping-pong mechanism, using a phosphorylated active-site intermediate. This chain is Nucleoside diphosphate kinase, found in Brucella melitensis biotype 1 (strain ATCC 23456 / CCUG 17765 / NCTC 10094 / 16M).